Reading from the N-terminus, the 537-residue chain is Tyrosine-protein kinase Fyn (537 aa).

Glycine 2 carries the N-myristoyl glycine lipid modification. 2 S-palmitoyl cysteine lipidation sites follow: cysteine 3 and cysteine 6. Position 12 is a phosphothreonine; by PKC (threonine 12). The SH3 domain maps to 82–143; the sequence is TGVTLFVALY…PSNYVAPVDS (62 aa). Residues 149–246 form the SH2 domain; that stretch reads WYFGKLGRKD…GLCCRLVVPC (98 aa). Residues 271 to 524 form the Protein kinase domain; sequence LQLIKRLGNG…YLQAFLEDYF (254 aa). Residues 277–285 and lysine 299 each bind ATP; that span reads LGNGQFGEV. The Proton acceptor role is filled by aspartate 390. Tyrosine 420 bears the Phosphotyrosine; by autocatalysis mark. Position 531 is a phosphotyrosine (tyrosine 531).

It belongs to the protein kinase superfamily. Tyr protein kinase family. SRC subfamily. As to quaternary structure, associates through its SH3 domain, to the p85 subunit of phosphatidylinositol 3-kinase. Requires Mn(2+) as cofactor.

The catalysed reaction is L-tyrosyl-[protein] + ATP = O-phospho-L-tyrosyl-[protein] + ADP + H(+). Inhibited by phosphorylation of Tyr-531 by leukocyte common antigen and activated by dephosphorylation of this site. Tyrosine-protein kinase implicated in the control of cell growth. Plays a role in the regulation of intracellular calcium levels. Required in brain development and mature brain function with important roles in the regulation of axon growth, axon guidance, and neurite extension. This Xiphophorus hellerii (Green swordtail) protein is Tyrosine-protein kinase Fyn (fyn).